The sequence spans 109 residues: Large ribosomal subunit protein uL24 (109 aa).

The protein belongs to the universal ribosomal protein uL24 family. Part of the 50S ribosomal subunit.

One of two assembly initiator proteins, it binds directly to the 5'-end of the 23S rRNA, where it nucleates assembly of the 50S subunit. In terms of biological role, one of the proteins that surrounds the polypeptide exit tunnel on the outside of the subunit. This Mesoplasma florum (strain ATCC 33453 / NBRC 100688 / NCTC 11704 / L1) (Acholeplasma florum) protein is Large ribosomal subunit protein uL24.